We begin with the raw amino-acid sequence, 334 residues long: Nucleoid-associated protein YejK (334 aa).

The protein belongs to the YejK family.

It localises to the cytoplasm. The protein localises to the nucleoid. This chain is Nucleoid-associated protein YejK, found in Escherichia fergusonii (strain ATCC 35469 / DSM 13698 / CCUG 18766 / IAM 14443 / JCM 21226 / LMG 7866 / NBRC 102419 / NCTC 12128 / CDC 0568-73).